The following is a 669-amino-acid chain: DNA ligase (669 aa).

Residues 33 to 37 (DAEYD), 82 to 83 (SL), and E114 contribute to the NAD(+) site. K116 acts as the N6-AMP-lysine intermediate in catalysis. R137, E174, K291, and K315 together coordinate NAD(+). Zn(2+)-binding residues include C409, C412, C427, and C433. The region spanning 593–669 (EIPQPLAGKV…QTEQDLLALL (77 aa)) is the BRCT domain.

This sequence belongs to the NAD-dependent DNA ligase family. LigA subfamily. Mg(2+) is required as a cofactor. The cofactor is Mn(2+).

The catalysed reaction is NAD(+) + (deoxyribonucleotide)n-3'-hydroxyl + 5'-phospho-(deoxyribonucleotide)m = (deoxyribonucleotide)n+m + AMP + beta-nicotinamide D-nucleotide.. Its function is as follows. DNA ligase that catalyzes the formation of phosphodiester linkages between 5'-phosphoryl and 3'-hydroxyl groups in double-stranded DNA using NAD as a coenzyme and as the energy source for the reaction. It is essential for DNA replication and repair of damaged DNA. In Vibrio vulnificus (strain YJ016), this protein is DNA ligase.